The following is a 307-amino-acid chain: Elongation factor Ts (307 aa).

Residues T80–V83 are involved in Mg(2+) ion dislocation from EF-Tu.

The protein belongs to the EF-Ts family.

The protein localises to the cytoplasm. In terms of biological role, associates with the EF-Tu.GDP complex and induces the exchange of GDP to GTP. It remains bound to the aminoacyl-tRNA.EF-Tu.GTP complex up to the GTP hydrolysis stage on the ribosome. This Variovorax paradoxus (strain S110) protein is Elongation factor Ts.